A 298-amino-acid chain; its full sequence is 4-hydroxy-tetrahydrodipicolinate synthase (298 aa).

Pyruvate is bound at residue threonine 51. Residue tyrosine 139 is the Proton donor/acceptor of the active site. The active-site Schiff-base intermediate with substrate is the lysine 167. Isoleucine 209 contacts pyruvate.

Belongs to the DapA family. Homotetramer; dimer of dimers.

The protein resides in the cytoplasm. The enzyme catalyses L-aspartate 4-semialdehyde + pyruvate = (2S,4S)-4-hydroxy-2,3,4,5-tetrahydrodipicolinate + H2O + H(+). The protein operates within amino-acid biosynthesis; L-lysine biosynthesis via DAP pathway; (S)-tetrahydrodipicolinate from L-aspartate: step 3/4. In terms of biological role, catalyzes the condensation of (S)-aspartate-beta-semialdehyde [(S)-ASA] and pyruvate to 4-hydroxy-tetrahydrodipicolinate (HTPA). The chain is 4-hydroxy-tetrahydrodipicolinate synthase from Haemophilus influenzae (strain PittEE).